The sequence spans 886 residues: Extended synaptotagmin-3 (886 aa).

Positions 1-21 (MRAEEPCAPGAPSALGAQRTP) are disordered. The Cytoplasmic segment spans residues 1–29 (MRAEEPCAPGAPSALGAQRTPGPELRLSS). Transmembrane regions (helical) follow at residues 30 to 50 (QLLP…GPVY) and 51 to 71 (LAGY…LWMW). Residues 72–886 (WRRNRRGKLG…ELTPNGQPRS (815 aa)) lie on the Cytoplasmic side of the membrane. The 178-residue stretch at 114–291 (DVERVEWANK…LPNRVTVPVK (178 aa)) folds into the SMP-LTD domain. C2 domains are found at residues 291–408 (KKGL…DEWF) and 426–566 (SLLT…QLDH). The Ca(2+) site is built by K321, D322, D332, D379, E380, D381, D383, D385, and D386. The disordered stretch occupies residues 613 to 673 (QGPKAQPQEE…PEPKGKDSAK (61 aa)). Over residues 642–659 (RSTTTTTSATTVATEPTS) the composition is skewed to low complexity. The segment covering 664 to 673 (PEPKGKDSAK) has biased composition (basic and acidic residues). Positions 754–876 (QLGEIQLTVR…DLIKGFSQWY (123 aa)) constitute a C2 3 domain. A required for phosphatidylinositol 4,5-bisphosphate-dependent location at the cell membrane region spans residues 801 to 808 (RKWACRKK).

This sequence belongs to the extended synaptotagmin family. In terms of assembly, interacts with ESYT1 and ESYT2. As to expression, widely expressed with high level in cerebellum and skin.

It localises to the cell membrane. It is found in the endoplasmic reticulum membrane. Functionally, binds glycerophospholipids in a barrel-like domain and may play a role in cellular lipid transport. Tethers the endoplasmic reticulum to the cell membrane and promotes the formation of appositions between the endoplasmic reticulum and the cell membrane. This Homo sapiens (Human) protein is Extended synaptotagmin-3.